The following is a 179-amino-acid chain: Large ribosomal subunit protein uL6 (179 aa).

It belongs to the universal ribosomal protein uL6 family. As to quaternary structure, part of the 50S ribosomal subunit.

This protein binds to the 23S rRNA, and is important in its secondary structure. It is located near the subunit interface in the base of the L7/L12 stalk, and near the tRNA binding site of the peptidyltransferase center. This Streptomyces griseus subsp. griseus (strain JCM 4626 / CBS 651.72 / NBRC 13350 / KCC S-0626 / ISP 5235) protein is Large ribosomal subunit protein uL6.